Reading from the N-terminus, the 98-residue chain is Keratinocyte differentiation-associated protein (98 aa).

The signal sequence occupies residues 1 to 22; it reads MKIPILPIVALLSLLALHAAQG.

As to expression, ubiquitously expressed in stratified epithelium.

It localises to the secreted. Functionally, may act as a soluble regulator of keratinocyte differentiation. May play an important role in embryonic skin morphogenesis. In Rattus norvegicus (Rat), this protein is Keratinocyte differentiation-associated protein.